Reading from the N-terminus, the 105-residue chain is U-scoloptoxin(05)-Ssd1a (105 aa).

Positions 1 to 24 (MKEAVKMSCLCIFVFLFLFSLTDA) are cleaved as a signal peptide. The interval 79-105 (HVPESNQKDGKVSTHMSSCNTDGCNAN) is disordered. Residues 92–105 (THMSSCNTDGCNAN) show a composition bias toward polar residues.

It belongs to the scoloptoxin-05 family. Post-translationally, contains 4 disulfide bonds. Expressed by the venom gland.

The protein localises to the secreted. The sequence is that of U-scoloptoxin(05)-Ssd1a from Scolopendra dehaani (Thai centipede).